A 139-amino-acid polypeptide reads, in one-letter code: Large ribosomal subunit protein mL42 (139 aa).

Residues 1 to 32 (MAVAAVKWVMSKRTILKHLFPVQNGALYCVCH) constitute a mitochondrion transit peptide.

It belongs to the mitochondrion-specific ribosomal protein mL42 family. Component of the mitochondrial ribosome large subunit (39S) which comprises a 16S rRNA and about 50 distinct proteins. Component of the mitochondrial ribosome small subunit (28S) which comprises a 12S rRNA and about 30 distinct proteins.

Its subcellular location is the mitochondrion. This chain is Large ribosomal subunit protein mL42 (MRPL42), found in Pongo abelii (Sumatran orangutan).